The primary structure comprises 57 residues: Large ribosomal subunit protein eL37 (57 aa).

Residues C20, C23, C35, and C38 each coordinate Zn(2+). The C4-type zinc-finger motif lies at 20–38; sequence CRRCGEKSYHKQKKVCASC.

This sequence belongs to the eukaryotic ribosomal protein eL37 family. It depends on Zn(2+) as a cofactor.

Functionally, binds to the 23S rRNA. This Natronomonas pharaonis (strain ATCC 35678 / DSM 2160 / CIP 103997 / JCM 8858 / NBRC 14720 / NCIMB 2260 / Gabara) (Halobacterium pharaonis) protein is Large ribosomal subunit protein eL37.